The sequence spans 341 residues: Paired box protein Pax-9 (341 aa).

A DNA-binding region (paired) is located at residues 4–130 (AFGEVNQLGG…SSISRILRNK (127 aa)). A PAI subdomain region spans residues 7–63 (EVNQLGGVFVNGRPLPNAIRLRIVELAQLGIRPCDISRQLRVSHGCVSKILARYNET). An RED subdomain region spans residues 82–130 (TVVKHIRTYKQRDPGIFAWEIRDRLLADGVCDKYNVPSVSSISRILRNK). Residues 168 to 189 (AAAAKVPTPPGVPAIPGSVAMP) form an interaction with KDM5B region.

Interacts with KDM5B.

It is found in the nucleus. Transcription factor required for normal development of thymus, parathyroid glands, ultimobranchial bodies, teeth, skeletal elements of skull and larynx as well as distal limbs. This is Paired box protein Pax-9 (PAX9) from Pan troglodytes (Chimpanzee).